We begin with the raw amino-acid sequence, 208 residues long: ATP phosphoribosyltransferase (208 aa).

The protein belongs to the ATP phosphoribosyltransferase family. Short subfamily. Heteromultimer composed of HisG and HisZ subunits.

The protein resides in the cytoplasm. It carries out the reaction 1-(5-phospho-beta-D-ribosyl)-ATP + diphosphate = 5-phospho-alpha-D-ribose 1-diphosphate + ATP. Its pathway is amino-acid biosynthesis; L-histidine biosynthesis; L-histidine from 5-phospho-alpha-D-ribose 1-diphosphate: step 1/9. Functionally, catalyzes the condensation of ATP and 5-phosphoribose 1-diphosphate to form N'-(5'-phosphoribosyl)-ATP (PR-ATP). Has a crucial role in the pathway because the rate of histidine biosynthesis seems to be controlled primarily by regulation of HisG enzymatic activity. The protein is ATP phosphoribosyltransferase of Hydrogenovibrio crunogenus (strain DSM 25203 / XCL-2) (Thiomicrospira crunogena).